The chain runs to 339 residues: tRNA N6-adenosine threonylcarbamoyltransferase (339 aa).

Positions 111 and 115 each coordinate Fe cation. Substrate contacts are provided by residues 134–138, Asp167, Gly180, and Asn279; that span reads VVSGG. Asp307 is a Fe cation binding site.

Belongs to the KAE1 / TsaD family. Fe(2+) serves as cofactor.

The protein localises to the cytoplasm. It catalyses the reaction L-threonylcarbamoyladenylate + adenosine(37) in tRNA = N(6)-L-threonylcarbamoyladenosine(37) in tRNA + AMP + H(+). Required for the formation of a threonylcarbamoyl group on adenosine at position 37 (t(6)A37) in tRNAs that read codons beginning with adenine. Is involved in the transfer of the threonylcarbamoyl moiety of threonylcarbamoyl-AMP (TC-AMP) to the N6 group of A37, together with TsaE and TsaB. TsaD likely plays a direct catalytic role in this reaction. The polypeptide is tRNA N6-adenosine threonylcarbamoyltransferase (Syntrophobacter fumaroxidans (strain DSM 10017 / MPOB)).